Here is a 156-residue protein sequence, read N- to C-terminus: Small ribosomal subunit protein uS7 (156 aa).

Belongs to the universal ribosomal protein uS7 family. Part of the 30S ribosomal subunit. Contacts proteins S9 and S11.

Functionally, one of the primary rRNA binding proteins, it binds directly to 16S rRNA where it nucleates assembly of the head domain of the 30S subunit. Is located at the subunit interface close to the decoding center, probably blocks exit of the E-site tRNA. In Clostridium beijerinckii (strain ATCC 51743 / NCIMB 8052) (Clostridium acetobutylicum), this protein is Small ribosomal subunit protein uS7.